Here is a 102-residue protein sequence, read N- to C-terminus: Polymeric immunoglobulin receptor (102 aa).

In terms of assembly, interacts (mainly via CDR1-like domain) with dimeric IgA. Interacts (mainly via CDR2-like domain) with pentameric IgM. Either free or part of the secretory IgA (sIgA) complex that consists of two, four or five IgA monomers, and two additional non-Ig polypeptides, namely the JCHAIN and the secretory component (the proteolytic product of PIGR). Free secretory component interacts with bacterial antigens toxA of C.difficile and eaeA of E.coli. Post-translationally, N-glycosylated. N-glycosylation is required for anchoring IgA molecules to mucus, but is not necessary for Ig binding.

Its subcellular location is the cell membrane. It is found in the secreted. Mediates selective transcytosis of polymeric IgA and IgM across mucosal epithelial cells. Binds polymeric IgA and IgM at the basolateral surface of epithelial cells. The complex is then transported across the cell to be secreted at the apical surface. During this process, a cleavage occurs that separates the extracellular (known as the secretory component) from the transmembrane segment. Through its N-linked glycans ensures anchoring of secretory IgA (sIgA) molecules to mucus lining the epithelial surface to neutralize extracellular pathogens. On its own (free form) may act as a non-specific microbial scavenger to prevent pathogen interaction with epithelial cells. This chain is Polymeric immunoglobulin receptor (PIGR), found in Sus scrofa (Pig).